The chain runs to 155 residues: Riboflavin synthase (155 aa).

This sequence belongs to the DMRL synthase family.

The enzyme catalyses 2 6,7-dimethyl-8-(1-D-ribityl)lumazine + H(+) = 5-amino-6-(D-ribitylamino)uracil + riboflavin. It functions in the pathway cofactor biosynthesis; riboflavin biosynthesis; riboflavin from 2-hydroxy-3-oxobutyl phosphate and 5-amino-6-(D-ribitylamino)uracil: step 2/2. This chain is Riboflavin synthase (ribC), found in Aeropyrum pernix (strain ATCC 700893 / DSM 11879 / JCM 9820 / NBRC 100138 / K1).